We begin with the raw amino-acid sequence, 309 residues long: Malate dehydrogenase (309 aa).

NAD(+) contacts are provided by residues 9-14 and Asp33; that span reads GAGFVG. Substrate is bound by residues Arg82 and Arg88. NAD(+)-binding positions include Asn95 and 118–120; that span reads VNN. The substrate site is built by Asn120 and Arg151. Catalysis depends on His175, which acts as the Proton acceptor.

This sequence belongs to the LDH/MDH superfamily. MDH type 3 family.

The enzyme catalyses (S)-malate + NAD(+) = oxaloacetate + NADH + H(+). Its function is as follows. Catalyzes the reversible oxidation of malate to oxaloacetate. The sequence is that of Malate dehydrogenase from Chloroflexus aurantiacus (strain ATCC 29364 / DSM 637 / Y-400-fl).